Here is a 357-residue protein sequence, read N- to C-terminus: Velvet complex subunit 2 (357 aa).

The Velvet domain occupies 32–341 (RRAERKYKLE…AQQGIKIPIR (310 aa)).

Belongs to the velvet family. VelB subfamily. As to quaternary structure, component of the heterotrimeric velvet complex composed of LAE1, VEL1 and VEL2; VEL1A acting as a bridging protein between LAE1 and VEL2. Forms a heterodimeric complex with VOS1; the formation of the VEL2-VOS1 complex is light-dependent.

The protein localises to the nucleus. The protein resides in the cytoplasm. Its function is as follows. Component of the velvet transcription factor complex that controls sexual/asexual developmental ratio in response to light, promoting sexual development in the darkness while stimulating asexual sporulation under illumination. The velvet complex acts as a global regulator for secondary metabolite gene expression. Component of the VEL2-VOS1 heterodimeric complex that plays a dual role in activating genes associated with spore maturation and repressing certain development-associated genes. The complex binds DNA through the DNA-binding domain of VOS1 that recognizes an 11-nucleotide consensus sequence 5'-CTGGCCGCGGC-3' consisting of two motifs in the promoters of key developmental regulatory genes. The VEL2-VOS1 complex is required for normal pseudothecium development and regulates asexual spore compartmentalization, pigmentation and germination. The sequence is that of Velvet complex subunit 2 from Cochliobolus heterostrophus (strain C5 / ATCC 48332 / race O) (Southern corn leaf blight fungus).